We begin with the raw amino-acid sequence, 299 residues long: CRISPR-associated endonuclease Cas1 3 (299 aa).

Mn(2+) contacts are provided by E143, H210, and D223.

This sequence belongs to the CRISPR-associated endonuclease Cas1 family. In terms of assembly, homodimer, forms a heterotetramer with a Cas2 homodimer. The cofactor is Mg(2+). Mn(2+) serves as cofactor.

Functionally, CRISPR (clustered regularly interspaced short palindromic repeat), is an adaptive immune system that provides protection against mobile genetic elements (viruses, transposable elements and conjugative plasmids). CRISPR clusters contain spacers, sequences complementary to antecedent mobile elements, and target invading nucleic acids. CRISPR clusters are transcribed and processed into CRISPR RNA (crRNA). Acts as a dsDNA endonuclease. Involved in the integration of spacer DNA into the CRISPR cassette. The chain is CRISPR-associated endonuclease Cas1 3 from Methanospirillum hungatei JF-1 (strain ATCC 27890 / DSM 864 / NBRC 100397 / JF-1).